A 378-amino-acid polypeptide reads, in one-letter code: GDP-mannose 3,5-epimerase 1 (378 aa).

NAD(+) contacts are provided by residues 36-62 (GAGG…SDWK), Asp60, and Asp80. Substrate is bound by residues Gly105 and 145–147 (SAC). Positions 175 and 179 each coordinate NAD(+). The active-site Proton acceptor is the Tyr175. Substrate is bound by residues Asn204, 217–219 (EKA), Lys226, 242–244 (QTR), Arg307, and Ser357.

It belongs to the NAD(P)-dependent epimerase/dehydratase family. Homodimer. NAD(+) is required as a cofactor.

The enzyme catalyses GDP-alpha-D-mannose = GDP-beta-L-gulose. It carries out the reaction GDP-beta-L-gulose = GDP-beta-L-galactose. The protein operates within cofactor biosynthesis; L-ascorbate biosynthesis via GDP-alpha-D-mannose pathway; L-ascorbate from GDP-alpha-D-mannose: step 1/5. In terms of biological role, catalyzes a reversible epimerization of GDP-D-mannose that precedes the committed step in the biosynthesis of vitamin C (L-ascorbate), resulting in the hydrolysis of the highly energetic glycosyl-pyrophosphoryl linkage. Able to catalyze 2 distinct epimerization reactions and can release both GDP-L-galactose and GDP-L-gulose from GDP-mannose. This is GDP-mannose 3,5-epimerase 1 from Oryza sativa subsp. indica (Rice).